The following is a 115-amino-acid chain: Phosphoribosyl-AMP cyclohydrolase (115 aa).

Residue aspartate 80 participates in Mg(2+) binding. Cysteine 81 is a binding site for Zn(2+). Aspartate 82 and aspartate 84 together coordinate Mg(2+). Zn(2+) contacts are provided by cysteine 97 and cysteine 104.

The protein belongs to the PRA-CH family. In terms of assembly, homodimer. It depends on Mg(2+) as a cofactor. Zn(2+) is required as a cofactor.

It is found in the cytoplasm. It carries out the reaction 1-(5-phospho-beta-D-ribosyl)-5'-AMP + H2O = 1-(5-phospho-beta-D-ribosyl)-5-[(5-phospho-beta-D-ribosylamino)methylideneamino]imidazole-4-carboxamide. Its pathway is amino-acid biosynthesis; L-histidine biosynthesis; L-histidine from 5-phospho-alpha-D-ribose 1-diphosphate: step 3/9. Its function is as follows. Catalyzes the hydrolysis of the adenine ring of phosphoribosyl-AMP. In Rhodococcus erythropolis (strain PR4 / NBRC 100887), this protein is Phosphoribosyl-AMP cyclohydrolase.